A 174-amino-acid polypeptide reads, in one-letter code: RNA pyrophosphohydrolase (174 aa).

The 154-residue stretch at proline 14–alanine 167 folds into the Nudix hydrolase domain. The Nudix box motif lies at glycine 55 to glycine 76.

It belongs to the Nudix hydrolase family. RppH subfamily. The cofactor is a divalent metal cation.

Its function is as follows. Accelerates the degradation of transcripts by removing pyrophosphate from the 5'-end of triphosphorylated RNA, leading to a more labile monophosphorylated state that can stimulate subsequent ribonuclease cleavage. This Brucella anthropi (strain ATCC 49188 / DSM 6882 / CCUG 24695 / JCM 21032 / LMG 3331 / NBRC 15819 / NCTC 12168 / Alc 37) (Ochrobactrum anthropi) protein is RNA pyrophosphohydrolase.